The sequence spans 327 residues: Annexin A8 (327 aa).

Annexin repeat units lie at residues 21-92, 93-164, 177-249, and 253-324; these read FNPD…ALMY, PPYR…CLLQ, GLAL…TVVK, and NVHS…NLVG. Residues methionine 266, glycine 268, glycine 270, and aspartate 310 each contribute to the Ca(2+) site.

Belongs to the annexin family.

This protein is an anticoagulant protein that acts as an indirect inhibitor of the thromboplastin-specific complex, which is involved in the blood coagulation cascade. In Rattus norvegicus (Rat), this protein is Annexin A8 (Anxa8).